The following is a 692-amino-acid chain: Elongation factor G (692 aa).

Positions 9–284 constitute a tr-type G domain; sequence EKIRNIGIMA…AVVDYLPSPV (276 aa). GTP is bound by residues 18 to 25, 82 to 86, and 136 to 139; these read AHIDAGKT, DTPGH, and NKMD.

This sequence belongs to the TRAFAC class translation factor GTPase superfamily. Classic translation factor GTPase family. EF-G/EF-2 subfamily.

It localises to the cytoplasm. Catalyzes the GTP-dependent ribosomal translocation step during translation elongation. During this step, the ribosome changes from the pre-translocational (PRE) to the post-translocational (POST) state as the newly formed A-site-bound peptidyl-tRNA and P-site-bound deacylated tRNA move to the P and E sites, respectively. Catalyzes the coordinated movement of the two tRNA molecules, the mRNA and conformational changes in the ribosome. The protein is Elongation factor G of Neorickettsia sennetsu (strain ATCC VR-367 / Miyayama) (Ehrlichia sennetsu).